Consider the following 259-residue polypeptide: Trypsin (259 aa).

Positions 1–32 (MKHFLRALKRCSVAVATVAIAVVGLQPVTASA) are cleaved as a signal peptide. A propeptide spans 33–36 (APNP) (activation peptide). The Peptidase S1 domain maps to 37-257 (VVGGTRAAQG…FASAIASAAR (221 aa)). An intrachain disulfide couples C58 to C74. Catalysis depends on charge relay system residues H73 and D118. 2 disulfides stabilise this stretch: C177–C192 and C204–C233. S208 functions as the Charge relay system in the catalytic mechanism.

The protein belongs to the peptidase S1 family.

It catalyses the reaction Preferential cleavage: Arg-|-Xaa, Lys-|-Xaa.. The chain is Trypsin (sprT) from Streptomyces griseus.